Consider the following 224-residue polypeptide: Large ribosomal subunit protein uL1 (224 aa).

The protein belongs to the universal ribosomal protein uL1 family. In terms of assembly, part of the 50S ribosomal subunit.

In terms of biological role, binds directly to 23S rRNA. The L1 stalk is quite mobile in the ribosome, and is involved in E site tRNA release. Protein L1 is also a translational repressor protein, it controls the translation of the L11 operon by binding to its mRNA. The polypeptide is Large ribosomal subunit protein uL1 (Borrelia hermsii (strain HS1 / DAH)).